The sequence spans 588 residues: Aspartate--tRNA ligase (588 aa).

E174 is an L-aspartate binding site. An aspartate region spans residues 198 to 201 (QLFK). Residue R220 coordinates L-aspartate. ATP is bound by residues 220-222 (RDE) and Q229. H448 provides a ligand contact to L-aspartate. Residue E482 coordinates ATP. Residue R489 coordinates L-aspartate. 534–537 (GLDR) is an ATP binding site.

This sequence belongs to the class-II aminoacyl-tRNA synthetase family. Type 1 subfamily. As to quaternary structure, homodimer.

It is found in the cytoplasm. The enzyme catalyses tRNA(Asp) + L-aspartate + ATP = L-aspartyl-tRNA(Asp) + AMP + diphosphate. Its function is as follows. Catalyzes the attachment of L-aspartate to tRNA(Asp) in a two-step reaction: L-aspartate is first activated by ATP to form Asp-AMP and then transferred to the acceptor end of tRNA(Asp). This Exiguobacterium sibiricum (strain DSM 17290 / CCUG 55495 / CIP 109462 / JCM 13490 / 255-15) protein is Aspartate--tRNA ligase.